The primary structure comprises 283 residues: Formamidopyrimidine-DNA glycosylase (283 aa).

Proline 2 functions as the Schiff-base intermediate with DNA in the catalytic mechanism. The active-site Proton donor is the glutamate 3. Lysine 58 (proton donor; for beta-elimination activity) is an active-site residue. DNA contacts are provided by histidine 100, arginine 119, and arginine 162. Residues 247–283 form an FPG-type zinc finger; sequence DVYGREGEPCRRAGCTGTVTRITQSGRSSFYCGKCQR. The Proton donor; for delta-elimination activity role is filled by arginine 273.

The protein belongs to the FPG family. In terms of assembly, monomer. Zn(2+) serves as cofactor.

It catalyses the reaction Hydrolysis of DNA containing ring-opened 7-methylguanine residues, releasing 2,6-diamino-4-hydroxy-5-(N-methyl)formamidopyrimidine.. The catalysed reaction is 2'-deoxyribonucleotide-(2'-deoxyribose 5'-phosphate)-2'-deoxyribonucleotide-DNA = a 3'-end 2'-deoxyribonucleotide-(2,3-dehydro-2,3-deoxyribose 5'-phosphate)-DNA + a 5'-end 5'-phospho-2'-deoxyribonucleoside-DNA + H(+). In terms of biological role, involved in base excision repair of DNA damaged by oxidation or by mutagenic agents. Acts as a DNA glycosylase that recognizes and removes damaged bases. Has a preference for oxidized purines, such as 7,8-dihydro-8-oxoguanine (8-oxoG). Has AP (apurinic/apyrimidinic) lyase activity and introduces nicks in the DNA strand. Cleaves the DNA backbone by beta-delta elimination to generate a single-strand break at the site of the removed base with both 3'- and 5'-phosphates. The polypeptide is Formamidopyrimidine-DNA glycosylase (Ruegeria sp. (strain TM1040) (Silicibacter sp.)).